Consider the following 282-residue polypeptide: MKVIHTIKDLQAELTALRAQGKKVGLVPTMGALHAGHASLVKRSVSENGVTVVSVFVNPTQFNDKNDLAKYPRTLDADCRLLEDCGAAFAFAPSVEEMYPQPDTREFSYAPLDTVMEGAFRPGHFNGVCQIVSKLFDAVQPDRAYFGEKDFQQLAIIREMVRQMDYKLEIVGCPIVREEDGLALSSRNKRLSARERENALNISQTLFKSRTFAASHTVSETQKMVEEAIEDAPGLRLEYFEIVDGNTLQKVSSWEDSLYVVGCITVFCGEVRLIDNIKYKEI.

30–37 (MGALHAGH) provides a ligand contact to ATP. Residue His37 is the Proton donor of the active site. Gln61 contributes to the (R)-pantoate binding site. Gln61 provides a ligand contact to beta-alanine. ATP is bound at residue 147 to 150 (GEKD). Residue Gln153 coordinates (R)-pantoate. ATP-binding positions include Val176 and 184–187 (LSSR).

It belongs to the pantothenate synthetase family. Homodimer.

It is found in the cytoplasm. The enzyme catalyses (R)-pantoate + beta-alanine + ATP = (R)-pantothenate + AMP + diphosphate + H(+). Its pathway is cofactor biosynthesis; (R)-pantothenate biosynthesis; (R)-pantothenate from (R)-pantoate and beta-alanine: step 1/1. Its function is as follows. Catalyzes the condensation of pantoate with beta-alanine in an ATP-dependent reaction via a pantoyl-adenylate intermediate. The polypeptide is Pantothenate synthetase (Bacteroides thetaiotaomicron (strain ATCC 29148 / DSM 2079 / JCM 5827 / CCUG 10774 / NCTC 10582 / VPI-5482 / E50)).